We begin with the raw amino-acid sequence, 191 residues long: MSLISRLRAVVAGDDFLDSDFDELEYDSSDDFENFNRGNKEGSTEMATISQANPFDGRSGFPPSNVIGMPGISTNDSEVSLMEPRSFDEMPRVIQALRERKTVILNLTMMEPDQAQRAVDFVAGGTFAIDGHQERVGESIFLFAPSCVTVTNSFQEEASPSNMSNKGNDLISKETSPAPEPAWGETVATAL.

Over residues 156–167 the composition is skewed to polar residues; it reads EEASPSNMSNKG. The disordered stretch occupies residues 156–191; it reads EEASPSNMSNKGNDLISKETSPAPEPAWGETVATAL.

This sequence belongs to the SepF family. In terms of assembly, homodimer. Interacts with FtsZ.

It localises to the cytoplasm. In terms of biological role, cell division protein that is part of the divisome complex and is recruited early to the Z-ring. Probably stimulates Z-ring formation, perhaps through the cross-linking of FtsZ protofilaments. Its function overlaps with FtsA. The chain is Cell division protein SepF from Prochlorococcus marinus (strain NATL1A).